We begin with the raw amino-acid sequence, 279 residues long: ATP-dependent Clp protease proteolytic subunit-related protein 2, chloroplastic (279 aa).

The N-terminal 54 residues, 1–54 (MAVSFNTTLHQPSLSPSCSIKLYSGLKPQSASFLASGYQNLNKEFYGRVYKSLQ), are a transit peptide targeting the chloroplast.

The protein belongs to the peptidase S14 family. As to quaternary structure, component of the chloroplastic Clp protease core complex which consist of at least 16 proteins: CLPP4 (3 copies), CLPP5 (3 copies), CLPR4 (2 copies), ClpP1 (1 copy), CLPP6 (1 copy), CLPR2 (1 copy), CLPT1 (1 copy), CLPT2 (1 copy) and 3 copies of CLPP3 and/or CLPR1 and/or CLPR3. The core complex is organized in two heptameric rings, one containing CLPP3,4,5,6 in a 1:2:3:1 ratio and the other CLPP1 and CLPR1,2,3,4 in a 3:1:1:1:1 ratio. In terms of tissue distribution, expressed at least in leaves and roots.

It is found in the plastid. The protein resides in the chloroplast. Functionally, required for chloroplast development and integrity. Involved in the regulation of plastoglobules formation. This chain is ATP-dependent Clp protease proteolytic subunit-related protein 2, chloroplastic, found in Arabidopsis thaliana (Mouse-ear cress).